We begin with the raw amino-acid sequence, 100 residues long: UPF0213 protein FN1575 (100 aa).

Residues Met-1 to Ile-77 enclose the GIY-YIG domain.

It belongs to the UPF0213 family.

This chain is UPF0213 protein FN1575, found in Fusobacterium nucleatum subsp. nucleatum (strain ATCC 25586 / DSM 15643 / BCRC 10681 / CIP 101130 / JCM 8532 / KCTC 2640 / LMG 13131 / VPI 4355).